The chain runs to 756 residues: Putative DNA ligase 052L (756 aa).

Lysine 103 functions as the N6-AMP-lysine intermediate in the catalytic mechanism. Residues 610 to 620 (PSAAGSASPCR) show a composition bias toward low complexity. The tract at residues 610–630 (PSAAGSASPCRPTKRRDDWFD) is disordered. The BRCT domain maps to 648–742 (KKRPPMQGYV…LKRQRKCRAR (95 aa)).

It belongs to the NAD-dependent DNA ligase family.

The catalysed reaction is NAD(+) + (deoxyribonucleotide)n-3'-hydroxyl + 5'-phospho-(deoxyribonucleotide)m = (deoxyribonucleotide)n+m + AMP + beta-nicotinamide D-nucleotide.. Catalyzes the formation of phosphodiester linkages between 5'-phosphoryl and 3'-hydroxyl groups in double-stranded DNA using NAD as a coenzyme and as the energy source for the reaction. This chain is Putative DNA ligase 052L, found in Invertebrate iridescent virus 3 (IIV-3).